The sequence spans 430 residues: Histidine--tRNA ligase (430 aa).

It belongs to the class-II aminoacyl-tRNA synthetase family. Homodimer.

The protein resides in the cytoplasm. The enzyme catalyses tRNA(His) + L-histidine + ATP = L-histidyl-tRNA(His) + AMP + diphosphate + H(+). The protein is Histidine--tRNA ligase of Chlamydia felis (strain Fe/C-56) (Chlamydophila felis).